The chain runs to 132 residues: Large ribosomal subunit protein uL14 (132 aa).

This sequence belongs to the universal ribosomal protein uL14 family. As to quaternary structure, part of the 50S ribosomal subunit. Forms a cluster with proteins L3 and L24e, part of which may contact the 16S rRNA in 2 intersubunit bridges.

Binds to 23S rRNA. Forms part of two intersubunit bridges in the 70S ribosome. This Halobacterium salinarum (strain ATCC 29341 / DSM 671 / R1) protein is Large ribosomal subunit protein uL14.